We begin with the raw amino-acid sequence, 256 residues long: Exosome complex component RRP41-like (256 aa).

This sequence belongs to the RNase PH family. Probable component of the RNA exosome complex. As to expression, highly expressed in imbibed seeds and young seedlings.

It localises to the cytoplasm. The protein localises to the nucleus. Functionally, non-catalytic component of the RNA exosome complex which has 3'-&gt;5' exoribonuclease activity and participates in a multitude of cellular RNA processing, maturation and degradation events. In vitro, is a processive phosphorolytic exonuclease and requires a single-stranded poly(A) tail on the substrate RNA for its activity. Plays an important role in seed germination and early seedling growth by mediating specific cytoplasmic mRNA decay of transcripts coding for the abscisic acid (ABA) biosynthetic enzymes NCED5 and NCED6, and the ABA signaling transcription factors ABI3 and ABI4. This is Exosome complex component RRP41-like from Arabidopsis thaliana (Mouse-ear cress).